The primary structure comprises 320 residues: Ferrochelatase (320 aa).

The Fe cation site is built by H194 and E275.

This sequence belongs to the ferrochelatase family. As to quaternary structure, monomer.

The protein localises to the cytoplasm. The enzyme catalyses heme b + 2 H(+) = protoporphyrin IX + Fe(2+). It participates in porphyrin-containing compound metabolism; protoheme biosynthesis; protoheme from protoporphyrin-IX: step 1/1. In terms of biological role, catalyzes the ferrous insertion into protoporphyrin IX. In Escherichia coli O81 (strain ED1a), this protein is Ferrochelatase.